The sequence spans 61 residues: L-amino-acid oxidase (61 aa).

43-44 contacts FAD; that stretch reads MA.

This sequence belongs to the flavin monoamine oxidase family. FIG1 subfamily. In terms of assembly, homodimer; non-covalently linked. Requires FAD as cofactor. N-glycosylated. Expressed by the venom gland.

The protein localises to the secreted. It catalyses the reaction an L-alpha-amino acid + O2 + H2O = a 2-oxocarboxylate + H2O2 + NH4(+). The catalysed reaction is L-leucine + O2 + H2O = 4-methyl-2-oxopentanoate + H2O2 + NH4(+). Catalyzes an oxidative deamination of predominantly hydrophobic and aromatic L-amino acids, thus producing hydrogen peroxide that may contribute to the diverse toxic effects of this enzyme. Shows activity on L-Leu. Exhibits diverse biological activities, such as apoptosis, antibacterial activities against both Gram-negative and Gram-positive bacteria and antiparasitic activities, as well as induction of platelet aggregation. Effects of snake L-amino oxidases on platelets are controversial, since they either induce aggregation or inhibit agonist-induced aggregation. These different effects are probably due to different experimental conditions. This protein may also induce hemorrhage, hemolysis, and edema. This is L-amino-acid oxidase from Crotalus durissus cascavella (Northeastern Brazilian rattlesnake).